A 161-amino-acid polypeptide reads, in one-letter code: Ribosome maturation factor RimP (161 aa).

The protein belongs to the RimP family.

It localises to the cytoplasm. Its function is as follows. Required for maturation of 30S ribosomal subunits. This Herminiimonas arsenicoxydans protein is Ribosome maturation factor RimP.